Here is a 426-residue protein sequence, read N- to C-terminus: Glutamate-1-semialdehyde 2,1-aminomutase (426 aa).

Lys-265 carries the N6-(pyridoxal phosphate)lysine modification.

It belongs to the class-III pyridoxal-phosphate-dependent aminotransferase family. HemL subfamily. As to quaternary structure, homodimer. Requires pyridoxal 5'-phosphate as cofactor.

It is found in the cytoplasm. The catalysed reaction is (S)-4-amino-5-oxopentanoate = 5-aminolevulinate. It functions in the pathway porphyrin-containing compound metabolism; protoporphyrin-IX biosynthesis; 5-aminolevulinate from L-glutamyl-tRNA(Glu): step 2/2. In Escherichia coli (strain SMS-3-5 / SECEC), this protein is Glutamate-1-semialdehyde 2,1-aminomutase.